A 174-amino-acid chain; its full sequence is Flavodoxin (174 aa).

The Flavodoxin-like domain maps to 4–166; the sequence is IGIFFGSDTG…RIIQWTKKIK (163 aa).

It belongs to the flavodoxin family. Requires FMN as cofactor.

Its function is as follows. Low-potential electron donor to a number of redox enzymes. This chain is Flavodoxin (fldA), found in Buchnera aphidicola subsp. Baizongia pistaciae (strain Bp).